A 343-amino-acid chain; its full sequence is Phosphoribosylformylglycinamidine cyclo-ligase (343 aa).

This sequence belongs to the AIR synthase family.

It localises to the cytoplasm. The enzyme catalyses 2-formamido-N(1)-(5-O-phospho-beta-D-ribosyl)acetamidine + ATP = 5-amino-1-(5-phospho-beta-D-ribosyl)imidazole + ADP + phosphate + H(+). The protein operates within purine metabolism; IMP biosynthesis via de novo pathway; 5-amino-1-(5-phospho-D-ribosyl)imidazole from N(2)-formyl-N(1)-(5-phospho-D-ribosyl)glycinamide: step 2/2. In Staphylococcus epidermidis (strain ATCC 35984 / DSM 28319 / BCRC 17069 / CCUG 31568 / BM 3577 / RP62A), this protein is Phosphoribosylformylglycinamidine cyclo-ligase.